A 53-amino-acid chain; its full sequence is GDDVKSACCDTCLCTKSNPPICRCVDIRETCHSACNSCVCTASIPPQCRFCYK.

5 disulfide bridges follow: C9–C24, C12–C51, C14–C22, C31–C38, and C40–C48.

Dimer.

Inhibits trypsin (IC(50)=6.20 nM), neutrophil elastase (ELANE) and, to a lesser extent, alpha-chymotrypsin (IC(50)=3.44 uM). The polypeptide is Bowman-Birk type proteinase inhibitor 1 (Lathyrus sativus (White vetchling)).